A 247-amino-acid chain; its full sequence is Phycobilisome rod-core linker polypeptide CpcG2 (247 aa).

Residues 11-189 form the PBS-linker domain; that stretch reads SSQNQRVPGY…YWRDKLENER (179 aa).

The protein belongs to the phycobilisome linker protein family. As to quaternary structure, the phycobilisome is a hemidiscoidal structure that is composed of two distinct substructures: a core complex and a number of rods radiating from the core.

It is found in the cellular thylakoid membrane. Rod-core linker protein required for attachment of phycocyanin to allophycocyanin in cores of phycobilisomes. Its function is as follows. Linker polypeptides determine the state of aggregation and the location of the disk-shaped phycobiliprotein units within the phycobilisome and modulate their spectroscopic properties in order to mediate a directed and optimal energy transfer. The polypeptide is Phycobilisome rod-core linker polypeptide CpcG2 (cpcG2) (Mastigocladus laminosus (Fischerella sp.)).